We begin with the raw amino-acid sequence, 145 residues long: MSMSTPQKAILPPFNADILPLGLYVAATVLLIGILLLAAWWLGDKKRSAAKEIAYESGVIPTGTARLAYPVPFYLVAIFFIVFDVEAVFIFTWAVAWDELGFPGLIHITAFIIVLLLGLVWLWLKGGLEWGPSKQVRRSKFEVRS.

A run of 3 helical transmembrane segments spans residues 18–38 (ILPL…LLLA), 71–91 (VPFY…VFIF), and 104–124 (GLIH…WLWL).

Belongs to the complex I subunit 3 family. NDH-1 is composed of 14 different subunits. Subunits NuoA, H, J, K, L, M, N constitute the membrane sector of the complex.

Its subcellular location is the cell inner membrane. The enzyme catalyses a quinone + NADH + 5 H(+)(in) = a quinol + NAD(+) + 4 H(+)(out). Functionally, NDH-1 shuttles electrons from NADH, via FMN and iron-sulfur (Fe-S) centers, to quinones in the respiratory chain. The immediate electron acceptor for the enzyme in this species is believed to be ubiquinone. Couples the redox reaction to proton translocation (for every two electrons transferred, four hydrogen ions are translocated across the cytoplasmic membrane), and thus conserves the redox energy in a proton gradient. This chain is NADH-quinone oxidoreductase subunit A 1, found in Geotalea uraniireducens (strain Rf4) (Geobacter uraniireducens).